The following is a 126-amino-acid chain: MSQLTSSVRVDVKTEYIETQSSPDEDKYLFSYTITIHNLGSDDVTLKRRHWCITDSNGRKSEVHGTGVVGETPTIKPNSSYKYTSGTVLETPLGVMEGSYTMVDSNGDEFKAPISAFRLSIPGLLH.

In terms of domain architecture, ApaG spans 2–126; sequence SQLTSSVRVD…FRLSIPGLLH (125 aa).

This Shewanella halifaxensis (strain HAW-EB4) protein is Protein ApaG.